A 1456-amino-acid chain; its full sequence is MAKVREVYQSFTDSTTKTLIQDEAYRNIRPIMEKHKLANPYAQTVEAANDLEGFGIATNPYSIELHTHAAAKTIENKLLEVLGSILPQEPVTFMFLKPRKLNYMRRNPRIKDIFHNVAIEPRDVARYPKETIIDKLTEITTDTAYIGDTLHFLDPSYIVETFQNCPKLQTLYATLVLPVEAAFKMESTHPNIYSLKYFGDGFQYIPGNHGGGAYHHEFSHLQWLKVGKIKWRDPKDSFLGHLNYTTEQVEMHTVTVQLQESFAANHLYCIRRGDLLTPEVRTFGQPDRYVIPPQIFLPKVHNCKKPILKKTMMQLFLYVRTVKVAKNCDIFAKVRQLIKSSDLDKYSAVELVYLVSYMEFLADLQATTCFSDTLSGGLLTKTLAPVRAWIQEKKMQLFGLEDYAKLVKAVDFHPVDFSFKVETWDFRFHPLQAWKAFRPREVSDVEEMENLFSDGDLLDCFTRMPAYAVNAEEDLAAIRKTPEMDAGQEVKEPAGDRNQYSNPAETFLSKLHRKHSREVKHQAAKKAKRLAEIQESMRAEGEAESNEMSGGMGAIPSNAELPSTSGARQELTLPTTKPVPARWEDASFTDSSVEEEQVKLPGKEAVETATQQVIEGLPWKHWIPQLNAVGFKALEIQRDRSGTMIMPITEMVSGLEKEDFPEGTPKELARELLAMNRSPATIPLDLLRARDYGSDVKNKRIGAITKTQAASWGEYLTGKIESLTERKVAACVIHGAGGSGKSHAIQKALREIGKGSDITVVLPTNELRLDWSKKVPNTEPYMFKTYEKALIGGTGSIVIFDDYSKLPPGYIEALICFYSKIKLVILTGDSRQSVYHETAEDASIRHLGPATEYFSKYCRYYLNATHRNKKDLANMLGVYSERTGVTEISMSAEFLEGIPTLVPSDEKRRLYMGTGRNDTFTYAGCQGLTKPKVQIVLDHNTQVCSANVMYTALSRATDRIHFVNTSANSSAFWEKLDSTPYLKTFLSVVREQALKEYEPAEAEPIREPEPQTHMCVENEESVLEEYKEELLEKFDREIHSESHGHSNCVQTEDTTIQLFSHQQAKDETLLWATIDARLKTSNQETNFREFLSKKDIGDVLFLNYQKAMGLPKERIPFSQEVWEACAHEVQSKYLSKSKCNLINGTVRQSPDFDENKIMVFLKSQWVTKVEKLGLPKIKPGQTIAAFYQQTVMLFGTMARYMRWFRQAFQPKEVFINCETTPEDMSAWALNNWNFSRPSLANDYTAFDQSQDGAMLQFEVLKAKHHCIPEEIIQAYIDIKTNAHIFLGTLSIMRLTGEGPTFDANTECNIAYTHTKFDIPAGTAQVYAGDDSALDCVPEVKHSFHRLEDKLLLKSKPVITQQKKGSWPEFCGWLITPKGVMKDPIKLHVSLKLAEAKGELKKCQDSYEIDLSYAYDHKDSLHDLFDEKQCQAHTLTCRTLIKSGRGTVSLPRLRNFL.

Residues Asn-59 to Leu-224 enclose the Alphavirus-like MT domain. Residues Met-537 to Leu-573 form a disordered region. Polar residues predominate over residues Glu-560–Leu-573. One can recognise a (+)RNA virus helicase ATP-binding domain in the interval Asp-695–Leu-862. Position 735–742 (Gly-735–Ser-742) interacts with ATP. The (+)RNA virus helicase C-terminal domain maps to Asn-863–Tyr-997. Residues Arg-1236–Phe-1343 form the RdRp catalytic domain.

Belongs to the potexvirus/carlavirus RNA replication protein family.

The catalysed reaction is RNA(n) + a ribonucleoside 5'-triphosphate = RNA(n+1) + diphosphate. The enzyme catalyses ATP + H2O = ADP + phosphate + H(+). Its function is as follows. RNA replication. The central part of this protein possibly functions as an ATP-binding helicase. The chain is RNA replication protein from Potato virus X (PVX).